A 517-amino-acid polypeptide reads, in one-letter code: U3 small nucleolar RNA-associated protein 15 homolog (517 aa).

WD repeat units lie at residues 36–75 (KEFG…PIRN), 78–117 (RFHD…SLRQ), 120–159 (GHSK…ELSS), 162–202 (EHTD…SVMT), 204–242 (QHGQ…QQLV), 246–285 (NHHK…HNFD), and 287–324 (ASSI…EKEA).

Part of the small subunit (SSU) processome, composed of more than 70 proteins and the RNA chaperone small nucleolar RNA (snoRNA) U3. May be a component of the proposed t-UTP subcomplex of the ribosomal small subunit (SSU) processome.

Its subcellular location is the nucleus. The protein localises to the nucleolus. Ribosome biogenesis factor. Involved in nucleolar processing of pre-18S ribosomal RNA. Required for optimal pre-ribosomal RNA transcription by RNA polymerase I. Part of the small subunit (SSU) processome, first precursor of the small eukaryotic ribosomal subunit. During the assembly of the SSU processome in the nucleolus, many ribosome biogenesis factors, an RNA chaperone and ribosomal proteins associate with the nascent pre-rRNA and work in concert to generate RNA folding, modifications, rearrangements and cleavage as well as targeted degradation of pre-ribosomal RNA by the RNA exosome. In Danio rerio (Zebrafish), this protein is U3 small nucleolar RNA-associated protein 15 homolog (utp15).